A 589-amino-acid polypeptide reads, in one-letter code: Mitoguardin 2 (589 aa).

A run of 2 helical transmembrane segments spans residues 11–31 and 42–62; these read IIQA…TTFG and PGLR…ALAA. Residues 87–134 form a disordered region; that stretch reads VPGSVLPVRRSSSAKKGYSRSRVQSPSSKSNDTLSGISSLDPSKHSSS. 2 stretches are compositionally biased toward low complexity: residues 106–116 and 123–134; these read RSRVQSPSSKS and ISSLDPSKHSSS.

This sequence belongs to the mitoguardin family. In terms of assembly, homodimer and heterodimer; forms heterodimers with miga1.

The protein localises to the mitochondrion outer membrane. Regulator of mitochondrial fusion: acts by forming homo- and heterodimers at the mitochondrial outer membrane and facilitating the formation of pld6/MitoPLD dimers. May act by regulating phospholipid metabolism via pld6/MitoPLD. The sequence is that of Mitoguardin 2 from Xenopus laevis (African clawed frog).